The sequence spans 403 residues: Dual-specificity RNA methyltransferase RlmN (403 aa).

The active-site Proton acceptor is E126. One can recognise a Radical SAM core domain in the interval E132–L375. A disulfide bond links C139 and C378. 3 residues coordinate [4Fe-4S] cluster: C146, C150, and C153. S-adenosyl-L-methionine-binding positions include G204–E205, S236, S258–H260, and N335. C378 acts as the S-methylcysteine intermediate in catalysis.

It belongs to the radical SAM superfamily. RlmN family. [4Fe-4S] cluster is required as a cofactor.

The protein localises to the cytoplasm. The enzyme catalyses adenosine(2503) in 23S rRNA + 2 reduced [2Fe-2S]-[ferredoxin] + 2 S-adenosyl-L-methionine = 2-methyladenosine(2503) in 23S rRNA + 5'-deoxyadenosine + L-methionine + 2 oxidized [2Fe-2S]-[ferredoxin] + S-adenosyl-L-homocysteine. The catalysed reaction is adenosine(37) in tRNA + 2 reduced [2Fe-2S]-[ferredoxin] + 2 S-adenosyl-L-methionine = 2-methyladenosine(37) in tRNA + 5'-deoxyadenosine + L-methionine + 2 oxidized [2Fe-2S]-[ferredoxin] + S-adenosyl-L-homocysteine. Its function is as follows. Specifically methylates position 2 of adenine 2503 in 23S rRNA and position 2 of adenine 37 in tRNAs. m2A2503 modification seems to play a crucial role in the proofreading step occurring at the peptidyl transferase center and thus would serve to optimize ribosomal fidelity. The protein is Dual-specificity RNA methyltransferase RlmN of Bradyrhizobium sp. (strain BTAi1 / ATCC BAA-1182).